Consider the following 468-residue polypeptide: Trigger factor (468 aa).

One can recognise a PPIase FKBP-type domain in the interval 162-243 (GDVLTLDLQA…VSQVAARELP (82 aa)). The disordered stretch occupies residues 428 to 468 (NGEIVDLDDEEDEETEAAEADATEAADAEKADDKAEEKTEG). Positions 432 to 453 (VDLDDEEDEETEAAEADATEAA) are enriched in acidic residues. Basic and acidic residues predominate over residues 454-468 (DAEKADDKAEEKTEG).

The protein belongs to the FKBP-type PPIase family. Tig subfamily.

It localises to the cytoplasm. The enzyme catalyses [protein]-peptidylproline (omega=180) = [protein]-peptidylproline (omega=0). Involved in protein export. Acts as a chaperone by maintaining the newly synthesized protein in an open conformation. Functions as a peptidyl-prolyl cis-trans isomerase. This chain is Trigger factor, found in Streptomyces coelicolor (strain ATCC BAA-471 / A3(2) / M145).